The primary structure comprises 60 residues: Large ribosomal subunit protein uL30 (60 aa).

It belongs to the universal ribosomal protein uL30 family. Part of the 50S ribosomal subunit.

This chain is Large ribosomal subunit protein uL30, found in Levilactobacillus brevis (strain ATCC 367 / BCRC 12310 / CIP 105137 / JCM 1170 / LMG 11437 / NCIMB 947 / NCTC 947) (Lactobacillus brevis).